Consider the following 397-residue polypeptide: Argininosuccinate synthase (397 aa).

9–17 (AYSGGLDTS) is a binding site for ATP. Residue tyrosine 86 coordinates L-citrulline. Glycine 116 contacts ATP. Residues threonine 118, asparagine 122, and aspartate 123 each coordinate L-aspartate. Asparagine 122 provides a ligand contact to L-citrulline. L-citrulline-binding residues include arginine 126, serine 174, glutamate 259, and tyrosine 271.

It belongs to the argininosuccinate synthase family. Type 1 subfamily. As to quaternary structure, homotetramer.

It is found in the cytoplasm. The enzyme catalyses L-citrulline + L-aspartate + ATP = 2-(N(omega)-L-arginino)succinate + AMP + diphosphate + H(+). Its pathway is amino-acid biosynthesis; L-arginine biosynthesis; L-arginine from L-ornithine and carbamoyl phosphate: step 2/3. This chain is Argininosuccinate synthase, found in Lactococcus lactis subsp. cremoris (strain MG1363).